The primary structure comprises 229 residues: MSDSQEIPYHNQLKNRFRGYFPVIIDVETAGFDAKKDALLELAAITLKMDENGYLHPDQKCHFHIEPFEGANINPESLKFNGIDIHNPLRGAVSELNAITGLFQMVRRGQKDADCQRSIIVAHNAAFDQSFVMAAAERTGVKRNPFHPFGMFDTASLAGLMFGQTVLVKACQAAKIPFDGKQAHSALYDTERTAKLFCYMVNHLKDLGGFPHIASELEQEKTTEKETAL.

The Exonuclease domain maps to 23-197 (VIIDVETAGF…YDTERTAKLF (175 aa)). Residues D26, E28, H184, and D189 each coordinate Mg(2+). Catalysis depends on H184, which acts as the Proton donor/acceptor.

Belongs to the RNase T family. Homodimer. The cofactor is Mg(2+).

Trims short 3' overhangs of a variety of RNA species, leaving a one or two nucleotide 3' overhang. Responsible for the end-turnover of tRNA: specifically removes the terminal AMP residue from uncharged tRNA (tRNA-C-C-A). Also appears to be involved in tRNA biosynthesis. The protein is Ribonuclease T of Haemophilus influenzae (strain PittGG).